Reading from the N-terminus, the 290-residue chain is Thymidylate synthase (290 aa).

DUMP is bound by residues arginine 27 and 152–153 (RR). Cysteine 172 (nucleophile) is an active-site residue. Residues 192–195 (RSAD), asparagine 203, and 233–235 (HVY) each bind dUMP. Aspartate 195 contacts (6R)-5,10-methylene-5,6,7,8-tetrahydrofolate. Alanine 289 contacts (6R)-5,10-methylene-5,6,7,8-tetrahydrofolate.

The protein belongs to the thymidylate synthase family. Homodimer.

It catalyses the reaction dUMP + (6R)-5,10-methylene-5,6,7,8-tetrahydrofolate = 7,8-dihydrofolate + dTMP. Its pathway is pyrimidine metabolism; dTTP biosynthesis. This is Thymidylate synthase (TS) from Ateles.